Consider the following 59-residue polypeptide: Cecropin-A2 (59 aa).

The N-terminal stretch at 1 to 23 (MNFNKLFAIVLLAALVLLGQTEA) is a signal peptide.

It belongs to the cecropin family.

The protein resides in the secreted. Functionally, cecropins have lytic and antibacterial activity against several Gram-positive and Gram-negative bacteria. The chain is Cecropin-A2 (CECA2) from Aedes albopictus (Asian tiger mosquito).